Here is an 800-residue protein sequence, read N- to C-terminus: Nuclear poly(A) polymerase 2 (800 aa).

ATP is bound by residues 103–105, 115–118, Asp171, Lys232, Tyr241, and 250–251; these read FGS, ADID, and GV. Positions 116, 118, and 171 each coordinate Mg(2+). 2 short sequence motifs (nuclear localization signal) span residues 487–494 and 533–540; these read RRRQLPSF and KRKNDDEI. Positions 497–576 are disordered; sequence PNGYKRSRQS…SGITTSGTPQ (80 aa). The segment covering 527–538 has biased composition (basic and acidic residues); sequence SVERYAKRKNDD. Residues 564-575 show a composition bias toward polar residues; sequence PDSSGITTSGTP.

Belongs to the poly(A) polymerase family. In terms of assembly, monomer. Forms a complex with cleavage and polyadenylation specificity factor (CPSF) subunits CPSF100, CPSF30, FIPS5 and PABN2. Mg(2+) serves as cofactor. Requires Mn(2+) as cofactor. As to expression, mostly expressed in flowers (highly in the style, receptacle and pedicel, but weakly in the vasculature of sepals) and hypocotyls, and, to a lower extent, in roots and stems. Barely detected in leaves (petioles and vascular system).

It is found in the nucleus. The protein localises to the cytoplasm. It catalyses the reaction RNA(n) + ATP = RNA(n)-3'-adenine ribonucleotide + diphosphate. In terms of biological role, essential protein. Polymerase that creates the 3'-poly(A) tail of mRNA's. Also required for the endoribonucleolytic cleavage reaction at some polyadenylation sites. May acquire specificity through interaction with a cleavage and polyadenylation specificity factor (CPSF) at its C-terminus. Mediates the polyadenylation of RNAs that are associated with polynucleotide phosphorylase (e.g. PNP1). The chain is Nuclear poly(A) polymerase 2 from Arabidopsis thaliana (Mouse-ear cress).